We begin with the raw amino-acid sequence, 80 residues long: Serine rich endogenous peptide 15 (80 aa).

The first 28 residues, 1–28, serve as a signal peptide directing secretion; it reads MSKEKSYVIALLLSLLLCLSFQVGVSEA. Short sequence motifs (SCOOP motif) lie at residues 32 to 46 and 66 to 80; these read AVTTRYSDSPRCANG and PRVAVHSNSTKGKGP. The segment at 37-80 is disordered; sequence YSDSPRCANGSSASPPTRHCPRGRPRPPTPRVAVHSNSTKGKGP. 2 short sequence motifs (sxS motif essential for MIK2 binding) span residues 38–40 and 72–74; these read SDS and SNS. The segment covering 71-80 has biased composition (polar residues); sequence HSNSTKGKGP.

The protein belongs to the serine rich endogenous peptide (SCOOP) phytocytokine family. In terms of assembly, interacts with MIK2 (via extracellular leucine-rich repeat domain); this interaction triggers the formation of complex between MIK2 and the BAK1/SERK3 and SERK4 coreceptors, and subsequent BAK1 activation by phosphorylation. As to expression, mostly expressed in leaves, and, to a lower extent, in seedlings shoots, roots, stems, siliques, seeds and flowers.

Its subcellular location is the cell membrane. It is found in the secreted. The protein localises to the extracellular space. The protein resides in the apoplast. It localises to the endoplasmic reticulum. Its subcellular location is the golgi apparatus. Brassicaceae-specific phytocytokine (plant endogenous peptide released into the apoplast) perceived by MIK2 in a BAK1/SERK3 and SERK4 coreceptors-dependent manner, that modulates various physiological and antimicrobial processes including growth prevention and reactive oxygen species (ROS) response regulation. Inhibits root growth. The sequence is that of Serine rich endogenous peptide 15 from Arabidopsis thaliana (Mouse-ear cress).